A 79-amino-acid polypeptide reads, in one-letter code: Putative membrane protein insertion efficiency factor (79 aa).

It belongs to the UPF0161 family.

The protein resides in the cell inner membrane. Its function is as follows. Could be involved in insertion of integral membrane proteins into the membrane. This chain is Putative membrane protein insertion efficiency factor, found in Synechocystis sp. (strain ATCC 27184 / PCC 6803 / Kazusa).